Here is a 160-residue protein sequence, read N- to C-terminus: Transcriptional repressor NrdR (160 aa).

Residues 3–34 (CPYCQCEDTQVKDSRPAEEGAVIRRRRVCSVC) fold into a zinc finger. One can recognise an ATP-cone domain in the interval 49 to 139 (LLVLKKSGRR…VYRDFRNASD (91 aa)).

It belongs to the NrdR family. It depends on Zn(2+) as a cofactor.

Functionally, negatively regulates transcription of bacterial ribonucleotide reductase nrd genes and operons by binding to NrdR-boxes. The sequence is that of Transcriptional repressor NrdR from Bartonella bacilliformis (strain ATCC 35685 / KC583 / Herrer 020/F12,63).